The sequence spans 259 residues: L-cystine import ATP-binding protein TcyN (259 aa).

The ABC transporter domain maps to 2–239 (IEIKNIHKQF…TKKDRTRQFL (238 aa)). 34 to 41 (GPSGSGKT) provides a ligand contact to ATP.

The protein belongs to the ABC transporter superfamily. L-cystine importer (TC 3.A.1.3.13) family. As to quaternary structure, the complex is composed of two ATP-binding proteins (TcyN), two transmembrane proteins (TcyL and TcyM) and two solute-binding proteins (TcyJ and TcyK).

It localises to the cell membrane. Functionally, part of the ABC transporter complex TcyJKLMN involved in L-cystine import. Responsible for energy coupling to the transport system. Is also involved in cystathionine, djenkolate, and S-methylcysteine transport. The polypeptide is L-cystine import ATP-binding protein TcyN (tcyN) (Bacillus subtilis (strain 168)).